The sequence spans 217 residues: Adenylate kinase (217 aa).

Residue 10–15 (GAGKGT) participates in ATP binding. The NMP stretch occupies residues 30 to 59 (STGDMFRAAIKAGTALGMKAKEYMDAGSLV). AMP is bound by residues T31, R36, 57–59 (SLV), 85–88 (GFPR), and Q92. Positions 126–163 (GRRICRQCGGTYHMVFNPPAAEAVCDKCGGELYQRSDD) are LID. R127 is a binding site for ATP. Residues C130 and C133 each coordinate Zn(2+). 136–137 (TY) is a binding site for ATP. Residues C150 and C153 each contribute to the Zn(2+) site. Residues R160 and R171 each coordinate AMP. Residue Q199 participates in ATP binding.

The protein belongs to the adenylate kinase family. In terms of assembly, monomer.

It is found in the cytoplasm. The enzyme catalyses AMP + ATP = 2 ADP. Its pathway is purine metabolism; AMP biosynthesis via salvage pathway; AMP from ADP: step 1/1. Catalyzes the reversible transfer of the terminal phosphate group between ATP and AMP. Plays an important role in cellular energy homeostasis and in adenine nucleotide metabolism. This Desulfitobacterium hafniense (strain DSM 10664 / DCB-2) protein is Adenylate kinase.